Here is a 673-residue protein sequence, read N- to C-terminus: UvrABC system protein B (673 aa).

The 387-residue stretch at 28–414 (ASILQNKRSQ…EAGGEIVEQL (387 aa)) folds into the Helicase ATP-binding domain. 41–48 (GITGSGKT) is a binding site for ATP. A Beta-hairpin motif is present at residues 94–117 (YYDYYQPEAYVPRTDTYIEKDMSI). Positions 433-595 (QVDDCLAEIR…ITPRTVKREI (163 aa)) constitute a Helicase C-terminal domain. Positions 633–668 (RLKIKECEKEMKKAAKEFRFEEAADWRDQMRRYQQI) constitute a UVR domain.

This sequence belongs to the UvrB family. Forms a heterotetramer with UvrA during the search for lesions. Interacts with UvrC in an incision complex.

It is found in the cytoplasm. In terms of biological role, the UvrABC repair system catalyzes the recognition and processing of DNA lesions. A damage recognition complex composed of 2 UvrA and 2 UvrB subunits scans DNA for abnormalities. Upon binding of the UvrA(2)B(2) complex to a putative damaged site, the DNA wraps around one UvrB monomer. DNA wrap is dependent on ATP binding by UvrB and probably causes local melting of the DNA helix, facilitating insertion of UvrB beta-hairpin between the DNA strands. Then UvrB probes one DNA strand for the presence of a lesion. If a lesion is found the UvrA subunits dissociate and the UvrB-DNA preincision complex is formed. This complex is subsequently bound by UvrC and the second UvrB is released. If no lesion is found, the DNA wraps around the other UvrB subunit that will check the other stand for damage. The protein is UvrABC system protein B of Protochlamydia amoebophila (strain UWE25).